A 263-amino-acid polypeptide reads, in one-letter code: MADWLIGIIMGAVEGLTEFLPVSSTGHMILTGHLLGFDDERAKVFEVVIQLGSILAVVVIFWKRLWSLVGIGKVTDGPSLNLLHIIIGMIPAGVLGVLFHSAIKEVLFGPGPVVISLVAGGILMIVAEKFSKPSTARTLDEITYKQAFTIGMFQCLALWPGFSRSGSTISGGLLARVSHTAAAEYTFILAVPMMVAASGLDLIKSWDILSAADIPLFATGFITAFVVAMLAIVSFLKLLSRVKLTPFAYYRFILAAVFYFFIM.

A run of 8 helical transmembrane segments spans residues 15–37 (GLTE…LLGF), 42–62 (AKVF…VIFW), 83–103 (LHII…HSAI), 106–126 (VLFG…LMIV), 142–162 (ITYK…WPGF), 183–203 (AEYT…LDLI), 216–236 (LFAT…VSFL), and 242–262 (VKLT…YFFI).

It belongs to the UppP family.

The protein localises to the cell membrane. It carries out the reaction di-trans,octa-cis-undecaprenyl diphosphate + H2O = di-trans,octa-cis-undecaprenyl phosphate + phosphate + H(+). Catalyzes the dephosphorylation of undecaprenyl diphosphate (UPP). Confers resistance to bacitracin. The sequence is that of Undecaprenyl-diphosphatase 2 from Bacillus cereus (strain ATCC 10987 / NRS 248).